The sequence spans 617 residues: Lipoteichoic acid synthase-like YvgJ (617 aa).

Residues 1 to 10 (MKGTFFHNQR) lie on the Cytoplasmic side of the membrane. Residues 11–31 (FLCFSILFMWIKTYVIYKLGF) traverse the membrane as a helical segment. The Extracellular portion of the chain corresponds to 32–41 (DLQIDTLLEE). A helical membrane pass occupies residues 42 to 62 (LMLLVNPLSFILPLFGIGLFL). At 63–68 (KENKQR) the chain is on the cytoplasmic side. The chain crosses the membrane as a helical span at residues 69–89 (AFLLIANLVLTVILISNTIFY). The Extracellular segment spans residues 90-115 (GFYIDFITIPVLFQASNMSDMGSSVK). The helical transmembrane segment at 116–136 (ELFHPLFIALFVDLVFLLLFA) threads the bilayer. Topologically, residues 137 to 153 (RKTKHPQTKAAPHTIKR) are cytoplasmic. Residues 154 to 171 (YYAASCGMLLCTLALAEV) traverse the membrane as a helical segment. The Extracellular portion of the chain corresponds to 172 to 617 (QQPKLLAHSF…LNGDLLRFSE (446 aa)). Glutamate 251 and threonine 293 together coordinate Mn(2+). Threonine 293 is a catalytic residue. Histidine 408 provides a ligand contact to substrate. Mn(2+) is bound by residues aspartate 467 and histidine 468.

The protein belongs to the LTA synthase family. Proteolytically cleaved.

Its subcellular location is the cell membrane. The protein localises to the secreted. The protein is Lipoteichoic acid synthase-like YvgJ (yvgJ) of Bacillus subtilis (strain 168).